The primary structure comprises 367 residues: Nuclear hormone receptor-like 1 (367 aa).

Residues 32-107 constitute a DNA-binding region (nuclear receptor); the sequence is GQPCVVCGDD…NGMTKSLVLN (76 aa). 2 NR C4-type zinc fingers span residues 35 to 55 and 71 to 95; these read CVVC…CEGC and CKSI…FQKC. In terms of domain architecture, NR LBD spans 145 to 367; the sequence is EFQSRIDQVT…IANILLFKFT (223 aa).

It belongs to the nuclear hormone receptor family.

It is found in the nucleus. This is Nuclear hormone receptor-like 1 (nhr-1) from Onchocerca volvulus.